The following is a 181-amino-acid chain: MMLQHPGQVSASEVSASAIVPCLSPPGSLVFEDFANLTPFVKEELRFAIQNKHLCHRMSSALESVTVSDRPLGVSITKAEVAPEEDERKKRRRERNKIAAAKCRNKKKEKTECLQKESEKLESVNAELKAQIEELKNEKQHLIYMLNLHRPTCIVRAQNGRTPEDERNLFIQQIKEGTLQS.

K78 participates in a covalent cross-link: Glycyl lysine isopeptide (Lys-Gly) (interchain with G-Cter in SUMO2). A bZIP domain is found at 86-149 (DERKKRRRER…QHLIYMLNLH (64 aa)). The interval 88–110 (RKKRRRERNKIAAAKCRNKKKEK) is basic motif. The interval 114–142 (LQKESEKLESVNAELKAQIEELKNEKQHL) is leucine-zipper. T162 bears the Phosphothreonine mark. Residue K175 forms a Glycyl lysine isopeptide (Lys-Gly) (interchain with G-Cter in SUMO2) linkage.

This sequence belongs to the bZIP family. ATF subfamily. In terms of assembly, binds DNA as a homodimer or a heterodimer. Interacts with KAT5; promoting KAT5 autoacetylation and KAT5 deubiquitination by USP7.

Its subcellular location is the nucleus. This protein binds the cAMP response element (CRE) (consensus: 5'-GTGACGT[AC][AG]-3'), a sequence present in many viral and cellular promoters. Represses transcription from promoters with ATF sites. It may repress transcription by stabilizing the binding of inhibitory cofactors at the promoter. In terms of biological role, activates transcription presumably by sequestering inhibitory cofactors away from the promoters. Its function is as follows. Stress-induced isoform, counteracts the transcriptional repression of isoform 1. The sequence is that of Cyclic AMP-dependent transcription factor ATF-3 from Homo sapiens (Human).